Reading from the N-terminus, the 82-residue chain is Small ribosomal subunit protein uS17 (82 aa).

The protein belongs to the universal ribosomal protein uS17 family. In terms of assembly, part of the 30S ribosomal subunit.

Its function is as follows. One of the primary rRNA binding proteins, it binds specifically to the 5'-end of 16S ribosomal RNA. The chain is Small ribosomal subunit protein uS17 from Afipia carboxidovorans (strain ATCC 49405 / DSM 1227 / KCTC 32145 / OM5) (Oligotropha carboxidovorans).